Here is a 252-residue protein sequence, read N- to C-terminus: Chitooligosaccharide deacetylase (252 aa).

Mg(2+) is bound by residues His61 and His125.

Belongs to the YdjC deacetylase family. ChbG subfamily. In terms of assembly, homodimer. Mg(2+) is required as a cofactor.

It localises to the cytoplasm. The catalysed reaction is N,N'-diacetylchitobiose + H2O = N-acetyl-beta-D-glucosaminyl-(1-&gt;4)-D-glucosamine + acetate. It carries out the reaction diacetylchitobiose-6'-phosphate + H2O = N'-monoacetylchitobiose-6'-phosphate + acetate. It functions in the pathway glycan degradation; chitin degradation. In terms of biological role, involved in the degradation of chitin. ChbG is essential for growth on the acetylated chitooligosaccharides chitobiose and chitotriose but is dispensable for growth on cellobiose and chitosan dimer, the deacetylated form of chitobiose. Deacetylation of chitobiose-6-P and chitotriose-6-P is necessary for both the activation of the chb promoter by the regulatory protein ChbR and the hydrolysis of phosphorylated beta-glucosides by the phospho-beta-glucosidase ChbF. Catalyzes the removal of only one acetyl group from chitobiose-6-P to yield monoacetylchitobiose-6-P, the inducer of ChbR and the substrate of ChbF. In Salmonella typhimurium (strain LT2 / SGSC1412 / ATCC 700720), this protein is Chitooligosaccharide deacetylase.